The sequence spans 437 residues: GTPase Der (437 aa).

2 consecutive EngA-type G domains span residues 4–167 (PVIA…PEDE) and 176–351 (IRIS…ENHN). Residues 10–17 (GRPNVGKS), 57–61 (DTGGI), 119–122 (NKID), 182–189 (GRPNVGKS), 229–233 (DTAGM), and 294–297 (NKWD) each bind GTP. The KH-like domain maps to 352–436 (LRVPTHVLND…PIKIIARKKN (85 aa)).

This sequence belongs to the TRAFAC class TrmE-Era-EngA-EngB-Septin-like GTPase superfamily. EngA (Der) GTPase family. In terms of assembly, associates with the 50S ribosomal subunit.

Functionally, GTPase that plays an essential role in the late steps of ribosome biogenesis. This chain is GTPase Der, found in Halalkalibacterium halodurans (strain ATCC BAA-125 / DSM 18197 / FERM 7344 / JCM 9153 / C-125) (Bacillus halodurans).